A 471-amino-acid chain; its full sequence is Serine hydroxymethyltransferase, cytosolic (471 aa).

N6-(pyridoxal phosphate)lysine is present on Lys249.

It belongs to the SHMT family. Requires pyridoxal 5'-phosphate as cofactor.

It localises to the cytoplasm. The protein resides in the cytosol. It carries out the reaction (6R)-5,10-methylene-5,6,7,8-tetrahydrofolate + glycine + H2O = (6S)-5,6,7,8-tetrahydrofolate + L-serine. It functions in the pathway one-carbon metabolism; tetrahydrofolate interconversion. Its function is as follows. Catalyzes the interconversion of serine and glycine. Essential for viability and required for virulence in a murine model of established pulmonary infection. This chain is Serine hydroxymethyltransferase, cytosolic, found in Aspergillus fumigatus (strain ATCC MYA-4609 / CBS 101355 / FGSC A1100 / Af293) (Neosartorya fumigata).